The following is a 606-amino-acid chain: Transmembrane 9 superfamily member 1 (606 aa).

An N-terminal signal peptide occupies residues 1–27; that stretch reads MTVLGHPRSWSCRWWPLLLLLLLTGRE. Asn178 carries N-linked (GlcNAc...) asparagine glycosylation. 4 helical membrane passes run 237–257, 310–330, 339–359, and 373–393; these read LSII…AVIL, VLGV…MALL, GAIN…SGYV, and VWNI…TWSV. Asn401 carries N-linked (GlcNAc...) asparagine glycosylation. The next 4 helical transmembrane spans lie at 412-432, 469-489, 499-519, and 535-555; these read ILLL…IGGI, VGGF…FATV, GILF…SIAL, and SVLS…FYYA. Asn559 carries an N-linked (GlcNAc...) asparagine glycan. The chain crosses the membrane as a helical span at residues 570-590; it reads FGYSLLTGYVFFLMLGTISFF.

This sequence belongs to the nonaspanin (TM9SF) (TC 9.A.2) family.

It is found in the lysosome membrane. It localises to the cytoplasmic vesicle. The protein localises to the autophagosome membrane. Its function is as follows. Plays an essential role in autophagy. This is Transmembrane 9 superfamily member 1 (TM9SF1) from Bos taurus (Bovine).